The sequence spans 507 residues: Efflux pump ustT (507 aa).

11 consecutive transmembrane segments (helical) span residues 59 to 79 (IAVV…IIVA), 146 to 166 (LLIA…VTWF), 180 to 200 (IWQL…AMIA), 216 to 236 (HAAV…LANF), 240 to 260 (IPVF…YVVV), 316 to 336 (VLLI…SGIT), 359 to 379 (AGVN…ILVK), 398 to 418 (VCLI…TLVF), 421 to 441 (TVFA…TGMV), 449 to 469 (VFTG…PMLA), and 481 to 501 (IWVG…LGAI).

It belongs to the major facilitator superfamily.

Its subcellular location is the cell membrane. Its pathway is mycotoxin biosynthesis. In terms of biological role, efflux pump; part of the gene cluster that mediates the biosynthesis of the secondary metabolite ustiloxin B, an antimitotic tetrapeptide. Probably involved in self-resistance through the export of ustiloxin B. The sequence is that of Efflux pump ustT from Aspergillus flavus (strain ATCC 200026 / FGSC A1120 / IAM 13836 / NRRL 3357 / JCM 12722 / SRRC 167).